Reading from the N-terminus, the 154-residue chain is Ribosome maturation factor RimP (154 aa).

The protein belongs to the RimP family.

The protein localises to the cytoplasm. Required for maturation of 30S ribosomal subunits. This is Ribosome maturation factor RimP from Cyanothece sp. (strain PCC 7425 / ATCC 29141).